The chain runs to 336 residues: Ketol-acid reductoisomerase (NADP(+)) (336 aa).

Residues 1-181 (MKVYYDQDAD…GGGRSGIIET (181 aa)) form the KARI N-terminal Rossmann domain. Residues 24-27 (YGSQ), arginine 47, serine 50, and serine 52 each bind NADP(+). Residue histidine 107 is part of the active site. Glycine 133 contacts NADP(+). Residues 182–327 (SFREETETDL…ERLRGMMPWI (146 aa)) enclose the KARI C-terminal knotted domain. 4 residues coordinate Mg(2+): aspartate 190, glutamate 194, glutamate 226, and glutamate 230. Serine 251 provides a ligand contact to substrate.

This sequence belongs to the ketol-acid reductoisomerase family. Mg(2+) is required as a cofactor.

The catalysed reaction is (2R)-2,3-dihydroxy-3-methylbutanoate + NADP(+) = (2S)-2-acetolactate + NADPH + H(+). The enzyme catalyses (2R,3R)-2,3-dihydroxy-3-methylpentanoate + NADP(+) = (S)-2-ethyl-2-hydroxy-3-oxobutanoate + NADPH + H(+). Its pathway is amino-acid biosynthesis; L-isoleucine biosynthesis; L-isoleucine from 2-oxobutanoate: step 2/4. The protein operates within amino-acid biosynthesis; L-valine biosynthesis; L-valine from pyruvate: step 2/4. In terms of biological role, involved in the biosynthesis of branched-chain amino acids (BCAA). Catalyzes an alkyl-migration followed by a ketol-acid reduction of (S)-2-acetolactate (S2AL) to yield (R)-2,3-dihydroxy-isovalerate. In the isomerase reaction, S2AL is rearranged via a Mg-dependent methyl migration to produce 3-hydroxy-3-methyl-2-ketobutyrate (HMKB). In the reductase reaction, this 2-ketoacid undergoes a metal-dependent reduction by NADPH to yield (R)-2,3-dihydroxy-isovalerate. This is Ketol-acid reductoisomerase (NADP(+)) from Halorhodospira halophila (strain DSM 244 / SL1) (Ectothiorhodospira halophila (strain DSM 244 / SL1)).